The sequence spans 218 residues: Capsid protein (218 aa).

The residue at position 1 (Met-1) is an N-acetylmethionine; by host. The disordered stretch occupies residues 1-30 (MDKSGSPNASRTSRRRRPRRGSRSASGADA). Residues 12–22 (TSRRRRPRRGS) are compositionally biased toward basic residues.

This sequence belongs to the cucumovirus capsid protein family.

The protein resides in the virion. Capsid protein. Probably binds RNA and plays a role in packaging. This Cucumis sativus (Cucumber) protein is Capsid protein.